A 368-amino-acid chain; its full sequence is Ferrochelatase (368 aa).

Fe cation is bound by residues histidine 209 and glutamate 290. Residues 347–368 form a disordered region; that stretch reads REEQEQQAHISREEARRLGADQ.

This sequence belongs to the ferrochelatase family.

It localises to the cytoplasm. It catalyses the reaction heme b + 2 H(+) = protoporphyrin IX + Fe(2+). It functions in the pathway porphyrin-containing compound metabolism; protoheme biosynthesis; protoheme from protoporphyrin-IX: step 1/1. In terms of biological role, catalyzes the ferrous insertion into protoporphyrin IX. This is Ferrochelatase from Janthinobacterium sp. (strain Marseille) (Minibacterium massiliensis).